A 296-amino-acid polypeptide reads, in one-letter code: METVYCTFDHKLSLSDISTLCKLMNIVIPIPAHHHLIGSGNLGLYPIVSSNKDYVHVRNVLRTMVVTILQKVEGNQLVLRKPVTGHQYAIKNTGPFPWEKGDTLTLIPPLSTHSEEKLLKLGDWELTVPLVVPTAIAAEINIRLLCIGLIAVHREYNEMQTIIDELCSIQYRDVLIKLPDIVNDKQSMYSMKTACISLSMITAMAPDIVRTYIDRLTLEDHSMLLIKCQELLSKRTTLNTQRCGQLHATEIKDELKKVKSVLTMIDQINSLTNEKTYFVVCDVSADNRMATCIYKN.

The protein belongs to the herpesviridae TRX2 protein family. In terms of assembly, interacts with TRX1 and major capisd protein/MCP.

Its subcellular location is the virion. It localises to the host nucleus. In terms of biological role, structural component of the T=16 icosahedral capsid. The capsid is composed of pentamers and hexamers of major capsid protein/MCP, which are linked together by heterotrimers called triplexes. These triplexes are formed by a single molecule of triplex protein 1/TRX1 and two copies of triplex protein 2/TRX2. Additionally, TRX1 is required for efficient transport of TRX2 to the nucleus, which is the site of capsid assembly. This Human herpesvirus 6A (strain Uganda-1102) (HHV-6 variant A) protein is Triplex capsid protein 2.